The chain runs to 319 residues: Malate dehydrogenase (319 aa).

NAD(+) contacts are provided by residues 11–16 (GAGNVG) and aspartate 36. Residues arginine 85 and arginine 91 each contribute to the substrate site. NAD(+) is bound by residues asparagine 98 and 121–123 (VSN). Positions 123 and 154 each coordinate substrate. The active-site Proton acceptor is the histidine 178.

Belongs to the LDH/MDH superfamily. MDH type 3 family.

It carries out the reaction (S)-malate + NAD(+) = oxaloacetate + NADH + H(+). Its function is as follows. Catalyzes the reversible oxidation of malate to oxaloacetate. This Sulfurimonas denitrificans (strain ATCC 33889 / DSM 1251) (Thiomicrospira denitrificans (strain ATCC 33889 / DSM 1251)) protein is Malate dehydrogenase.